Consider the following 320-residue polypeptide: Lipoyl synthase (320 aa).

Positions 67, 72, 78, 93, 97, 100, and 307 each coordinate [4Fe-4S] cluster. Residues 79–296 (FNHGTATFMI…RDKAEKMGFE (218 aa)) enclose the Radical SAM core domain.

This sequence belongs to the radical SAM superfamily. Lipoyl synthase family. It depends on [4Fe-4S] cluster as a cofactor.

The protein resides in the cytoplasm. The catalysed reaction is [[Fe-S] cluster scaffold protein carrying a second [4Fe-4S](2+) cluster] + N(6)-octanoyl-L-lysyl-[protein] + 2 oxidized [2Fe-2S]-[ferredoxin] + 2 S-adenosyl-L-methionine + 4 H(+) = [[Fe-S] cluster scaffold protein] + N(6)-[(R)-dihydrolipoyl]-L-lysyl-[protein] + 4 Fe(3+) + 2 hydrogen sulfide + 2 5'-deoxyadenosine + 2 L-methionine + 2 reduced [2Fe-2S]-[ferredoxin]. It functions in the pathway protein modification; protein lipoylation via endogenous pathway; protein N(6)-(lipoyl)lysine from octanoyl-[acyl-carrier-protein]: step 2/2. In terms of biological role, catalyzes the radical-mediated insertion of two sulfur atoms into the C-6 and C-8 positions of the octanoyl moiety bound to the lipoyl domains of lipoate-dependent enzymes, thereby converting the octanoylated domains into lipoylated derivatives. This Histophilus somni (strain 129Pt) (Haemophilus somnus) protein is Lipoyl synthase.